The following is a 216-amino-acid chain: DNA-binding protein HupB (216 aa).

Gly2 is a propeptide (removed; alternate). Position 3 is an N-acetylmethionine (Met3). The bacterial histone-like domain stretch occupies residues 3–92 (MNKAELIDVL…PGAQFKAVVS (90 aa)). Lys5, Lys74, Lys88, Lys105, Lys118, and Lys135 each carry N6-acetyllysine. Residues 102–216 (PAVKRGVGAS…KKATARRGRK (115 aa)) are disordered. Positions 103–216 (AVKRGVGASA…KKATARRGRK (114 aa)) are degenerate repeats region. Residues 104 to 114 (VKRGVGASAAK) show a composition bias toward low complexity. Over residues 115-216 (KVAKKAPAKK…KKATARRGRK (102 aa)) the composition is skewed to basic residues. Lys140 carries the N6,N6,N6-trimethyllysine modification. N6-acetyllysine is present on residues Lys148 and Lys169.

This sequence belongs to the bacterial histone-like protein family. Long actinobacterial subfamily. Oligomerizes. Interacts with topoisomerase 1 (topA). Interacts with Eis. Interacts with antigen 85 proteins (fbpA, fbpB, fbpC). In terms of processing, probably acetylated by Eis in vivo. In vitro acetylated by Eis (strain H37Rv and H37Ra) on many more residues than those identified in vivo. Deacetylated in vitro by NAD-dependent protein deacylase (Rv1151c). Post-translationally, trimethylated on Lys-140 by human SUV39H1; trimethylation inhibits mycobacterial growth. SUV39H1 probably also trimethylates another residue. Probably succinylated by Rv0802c and desuccinylated by NAD-dependent protein deacylase (Rv1151c).

The protein localises to the cytoplasm. It localises to the nucleoid. It is found in the secreted. Its subcellular location is the cell wall. It catalyses the reaction 4 Fe(2+) + O2 + 4 H(+) = 4 Fe(3+) + 2 H2O. A nucleoid-associated protein (NAP) that probably plays a role in chromosome compactation. Binds DNA non-specifically, with greater affinity for supercoiled than linear DNA, binds well to nicked DNA, gapped and cruciform DNA. Has a preference for A:T rich DNA. Required for activation of the mtbB operon. Binds the mtbB promoter in the presence of iron, binding is seen with as little as 25 uM Fe(2+) and increases with increasing Fe(2+). RNase E and HupB jointly contribute to cellular adaptation to changing growth conditions and survival during antibiotic treatment and in the host. Plays a role in stress survival. Stimulates supercoiling relaxation by topoisomerase 1 (Top1, topA). In terms of biological role, binds Fe(3+) but not Fe(2+). Has ferroxidase activity, converts Fe(2+) into Fe(3+) and in the presence of H(2)O(2) prevents the generation of hydroxyl radicals (the Fenton reaction). Protects DNA from damage in the presence of FeSO(4) and H(2)O(2). May function in iron storage. Involved in iron uptake by bacteria (either Fe(3+) or extracellular carboxymycobactin); antibodies against HupB block uptake of both. Following uptake iron is mostly found in the iron siderophores carboxymycobactin (CMb, extracellular) or mycobactin (Mb, lipophilic). Facilitates transfer of iron from CMb to Mb when liposomes plus a cell wall lysate are incubated with CMb. Binds iron, ferri-CMb and ferri-Mb; has 10-fold higher affinity for ferri-Mb. Suggested to transfer iron from CBm to Mb at the cell membrane. Functionally, required for biofilm formation; trimethylation by recombinant human SUV39H1 (a histone methyltransferase) inhibits biofilm formation. Induces lymphoproliferation, particularly in health tuberculin reactors, and is immunogenic. Maybe involved in pathogenesis of inflammatory bowel disease (IBD) in patients with ulcerative colitis and Crohn disease (CD). Bound by anti-neutrophil cytoplasmic antibodies (pANCA), which are a hallmark of IBD. The binding is due to pANCA directed against H1-3 cross-reacting with DBH epitopes. In CD, target of a strong IgA response. Its function is as follows. May play a role in cell wall assembly. In vitro at low levels enhances formation of TMM and TDM by antigen 85 proteins (fbpA, fbpB, fbpC), at higher levels inhibits TMM and TDM formation. This is DNA-binding protein HupB from Mycobacterium tuberculosis (strain ATCC 25618 / H37Rv).